Here is a 332-residue protein sequence, read N- to C-terminus: Alanine racemase (332 aa).

The Proton acceptor; specific for D-alanine role is filled by lysine 33. Lysine 33 carries the N6-(pyridoxal phosphate)lysine modification. Arginine 115 is a substrate binding site. Tyrosine 245 acts as the Proton acceptor; specific for L-alanine in catalysis. Methionine 286 contacts substrate.

Belongs to the alanine racemase family. It depends on pyridoxal 5'-phosphate as a cofactor.

It catalyses the reaction L-alanine = D-alanine. The protein operates within amino-acid biosynthesis; D-alanine biosynthesis; D-alanine from L-alanine: step 1/1. Its function is as follows. Catalyzes the interconversion of L-alanine and D-alanine. May also act on other amino acids. This Nitratiruptor sp. (strain SB155-2) protein is Alanine racemase (alr).